Reading from the N-terminus, the 151-residue chain is SsrA-binding protein (151 aa).

It belongs to the SmpB family.

The protein resides in the cytoplasm. Required for rescue of stalled ribosomes mediated by trans-translation. Binds to transfer-messenger RNA (tmRNA), required for stable association of tmRNA with ribosomes. tmRNA and SmpB together mimic tRNA shape, replacing the anticodon stem-loop with SmpB. tmRNA is encoded by the ssrA gene; the 2 termini fold to resemble tRNA(Ala) and it encodes a 'tag peptide', a short internal open reading frame. During trans-translation Ala-aminoacylated tmRNA acts like a tRNA, entering the A-site of stalled ribosomes, displacing the stalled mRNA. The ribosome then switches to translate the ORF on the tmRNA; the nascent peptide is terminated with the 'tag peptide' encoded by the tmRNA and targeted for degradation. The ribosome is freed to recommence translation, which seems to be the essential function of trans-translation. The sequence is that of SsrA-binding protein from Lactobacillus acidophilus (strain ATCC 700396 / NCK56 / N2 / NCFM).